The sequence spans 427 residues: Delta(14)-sterol reductase (427 aa).

Residues 1–25 lie on the Cytoplasmic side of the membrane; it reads MSEQESRDNAAVDAVRQKYGFGFSW. The helical transmembrane segment at 26–46 threads the bilayer; it reads LVLMIALPPLVYYLWICVTYY. Topologically, residues 47–70 are periplasmic; the sequence is QGELVFTSDAAAWRRFWSHVAPPT. Residues 71–91 traverse the membrane as a helical segment; that stretch reads WHAAGLYAAWFLGQAALQVWA. The Cytoplasmic segment spans residues 92–110; sequence PGPTVQGMKLPDGSRLDYR. A helical transmembrane segment spans residues 111–131; that stretch reads MNGIFSFLFTLAVVFGLVTMG. Topologically, residues 132 to 141 are periplasmic; that stretch reads WLDATVLYDQ. A helical transmembrane segment spans residues 142–162; it reads LGPLLTVVNIFTFVFAGFLYF. At 163–197 the chain is on the cytoplasmic side; it reads WGLNGKQWERPTGRPFYDYFMGTALNPRIGSLDLK. A helical transmembrane segment spans residues 198 to 218; sequence LFCEARPGMIFWLLMNLSMAA. The Periplasmic segment spans residues 219–226; sequence KQYELHGT. Residues 227 to 247 form a helical membrane-spanning segment; sequence VTVPMLLVVGFQSFYLIDYFI. Residues 248–262 are Cytoplasmic-facing; that stretch reads HEEAVLTTWDIKHEK. Residues 263–283 form a helical membrane-spanning segment; the sequence is FGWMLCWGDLVWLPFTYTLQA. Over 284-291 the chain is Periplasmic; that stretch reads QYLVHHTH. Residues 292 to 312 traverse the membrane as a helical segment; sequence DLPVWGIIAIVALNLAGYAIF. Topologically, residues 313-356 are cytoplasmic; sequence RGANIQKHHFRRDPNRIVWGKPAKYIKTKQGSLLLTSGWWGIAR. Residues lysine 319, arginine 323, leucine 347, tryptophan 352, and 359–360 each bind NADP(+); that span reads NY. A helical membrane pass occupies residues 357 to 377; sequence HMNYFGDLMIALSWCLPAAFG. Serine 378 is a topological domain (periplasmic). The chain crosses the membrane as a helical span at residues 379–399; the sequence is PIPYFHIVYFTILLLHREKRD. NADP(+) contacts are provided by residues aspartate 399, 403-407, and tyrosine 414; that span reads CLAKY. The Cytoplasmic segment spans residues 400 to 427; that stretch reads DAMCLAKYGEDWLQYRKKVPWRIVPKIY.

Belongs to the ERG4/ERG24 family.

It localises to the cell inner membrane. It catalyses the reaction 4,4-dimethyl-5alpha-cholesta-8,24-dien-3beta-ol + NADP(+) = 4,4-dimethyl-5alpha-cholesta-8,14,24-trien-3beta-ol + NADPH + H(+). The protein operates within steroid biosynthesis; zymosterol biosynthesis; zymosterol from lanosterol. Its function is as follows. Reduces the C14=C15 double bond of 4,4-dimethyl-cholesta-8,14,24-trienol to produce 4,4-dimethyl-cholesta-8,24-dienol. Complements the deletion of the Delta(14)-sterol reductase gene ERG24 in yeast. This chain is Delta(14)-sterol reductase, found in Methylotuvimicrobium alcaliphilum (strain DSM 19304 / NCIMB 14124 / VKM B-2133 / 20Z) (Methylomicrobium alcaliphilum).